A 982-amino-acid chain; its full sequence is Ubiquitin carboxyl-terminal hydrolase 15 (982 aa).

The region spanning 7–118 (VDLETQRSEV…SQQPIARKVV (112 aa)) is the DUSP domain. One can recognise a USP domain in the interval 288–933 (CGLSNLGNTC…AAYVLFYQRQ (646 aa)). Catalysis depends on C297, which acts as the Nucleophile. The interval 623-695 (TEENDGSLHC…DNDSENGLCT (73 aa)) is disordered. Residues 655–672 (METDEPDDESSQDQELPS) are compositionally biased toward acidic residues. H891 serves as the catalytic Proton acceptor. Residues 950–982 (QGASAATGAPHESDEESNEDENDIENENCMHTN) are disordered. The span at 962-975 (SDEESNEDENDIEN) shows a compositional bias: acidic residues.

Belongs to the peptidase C19 family.

Its subcellular location is the cytoplasm. It is found in the nucleus. It carries out the reaction Thiol-dependent hydrolysis of ester, thioester, amide, peptide and isopeptide bonds formed by the C-terminal Gly of ubiquitin (a 76-residue protein attached to proteins as an intracellular targeting signal).. In terms of biological role, hydrolase that removes conjugated ubiquitin from target proteins and regulates various pathways such as the TGF-beta receptor signaling and NF-kappa-B pathways. Acts as a key regulator of TGF-beta receptor signaling pathway, but the precise mechanism is still unclear: according to a report, acts by promoting deubiquitination of monoubiquitinated R-SMADs, thereby alleviating inhibition of R-SMADs and promoting activation of TGF-beta target genes. According to another reports, regulates the TGF-beta receptor signaling pathway by mediating deubiquitination and stabilization of tgfbr1, leading to an enhanced TGF-beta signal. May also regulate gene expression and/or DNA repair through the deubiquitination of histone H2B. Involved in endosome organization by mediating deubiquitination of rnf26 target(s), releasing vesicles that are restrained in the perinuclear region. The protein is Ubiquitin carboxyl-terminal hydrolase 15 (usp15) of Xenopus tropicalis (Western clawed frog).